Consider the following 99-residue polypeptide: Integration host factor subunit alpha (99 aa).

This sequence belongs to the bacterial histone-like protein family. In terms of assembly, heterodimer of an alpha and a beta chain.

This protein is one of the two subunits of integration host factor, a specific DNA-binding protein that functions in genetic recombination as well as in transcriptional and translational control. This is Integration host factor subunit alpha from Stenotrophomonas maltophilia (strain R551-3).